A 309-amino-acid polypeptide reads, in one-letter code: Malate dehydrogenase (309 aa).

NAD(+)-binding positions include 9 to 14 (GAGFVG) and D33. Substrate-binding residues include R82 and R88. NAD(+)-binding positions include N95 and 118 to 120 (VNN). Substrate contacts are provided by N120 and R151. H175 functions as the Proton acceptor in the catalytic mechanism.

The protein belongs to the LDH/MDH superfamily. MDH type 3 family.

It carries out the reaction (S)-malate + NAD(+) = oxaloacetate + NADH + H(+). In terms of biological role, catalyzes the reversible oxidation of malate to oxaloacetate. This Chloroflexus aurantiacus (strain ATCC 29364 / DSM 637 / Y-400-fl) protein is Malate dehydrogenase.